The primary structure comprises 1351 residues: Tripartite motif-containing protein 66 (1351 aa).

The B box-type 1; atypical zinc finger occupies 105 to 150 (MARNCSECKEKRAAHILCTYCNRWLCSSCTEEHRHSPVPGGPFFPR). Cys109, Cys112, Cys133, His139, Cys169, His172, Cys192, and His197 together coordinate Zn(2+). Residues 164-205 (DFTLYCPLHTQEVLKLFCETCDMLTCHSCLVVEHKEHRCRHV) form a B box-type 2 zinc finger. Residues 234–304 (AKQIEDRIFE…IMVLNRQFEH (71 aa)) adopt a coiled-coil conformation. Disordered stretches follow at residues 542–608 (FGHH…CSQN), 663–730 (APVQ…VRKH), and 857–895 (CPLQ…DPSL). The span at 560-588 (QLPPPPPPLPHPPPPLPPPPQQPHPPLPP) shows a compositional bias: pro residues. The segment covering 664 to 676 (PVQSQSQEETLQA) has biased composition (polar residues). Residues 872–884 (TGSSSSSGRTSGS) show a composition bias toward low complexity. The PxVxL motif motif lies at 995 to 999 (PYVRL). The tract at residues 1067 to 1098 (TSLAGQRPPEVEGTSPEEHRLIPRTPGAKKGP) is disordered. The PHD-type zinc finger occupies 1105 to 1152 (EDFCAVCLNGGELLCCDRCPKVFHLSCHVPALLSFPGGEWVCTLCRSL). In terms of domain architecture, Bromo spans 1176 to 1282 (GLSMYDQKKC…VFFEGWLKEI (107 aa)). The tract at residues 1289–1351 (AQPRQEDSDS…FRLANSISQV (63 aa)) is disordered.

As to quaternary structure, can form homodimers and heterodimers. Interacts with CBX5, CBX1 and CBX3 via PxVxL motif.

Its subcellular location is the nucleus. Functionally, may function as transcription repressor; The repressive effects are mediated, at least in part, by recruitment of deacetylase activity. May play a role as negative regulator of postmeiotic genes acting through CBX3 complex formation and centromere association. This chain is Tripartite motif-containing protein 66 (TRIM66), found in Homo sapiens (Human).